Reading from the N-terminus, the 141-residue chain is Large ribosomal subunit protein uL16m (141 aa).

This sequence belongs to the universal ribosomal protein uL16 family.

It is found in the mitochondrion. The polypeptide is Large ribosomal subunit protein uL16m (RPL16) (Acanthamoeba castellanii (Amoeba)).